Consider the following 225-residue polypeptide: NAD(P)H-quinone oxidoreductase subunit K, chloroplastic (225 aa).

Cysteine 43, cysteine 44, cysteine 108, and cysteine 139 together coordinate [4Fe-4S] cluster.

The protein belongs to the complex I 20 kDa subunit family. NDH is composed of at least 16 different subunits, 5 of which are encoded in the nucleus. [4Fe-4S] cluster is required as a cofactor.

Its subcellular location is the plastid. The protein localises to the chloroplast thylakoid membrane. It carries out the reaction a plastoquinone + NADH + (n+1) H(+)(in) = a plastoquinol + NAD(+) + n H(+)(out). It catalyses the reaction a plastoquinone + NADPH + (n+1) H(+)(in) = a plastoquinol + NADP(+) + n H(+)(out). Its function is as follows. NDH shuttles electrons from NAD(P)H:plastoquinone, via FMN and iron-sulfur (Fe-S) centers, to quinones in the photosynthetic chain and possibly in a chloroplast respiratory chain. The immediate electron acceptor for the enzyme in this species is believed to be plastoquinone. Couples the redox reaction to proton translocation, and thus conserves the redox energy in a proton gradient. In Arabidopsis thaliana (Mouse-ear cress), this protein is NAD(P)H-quinone oxidoreductase subunit K, chloroplastic.